A 131-amino-acid chain; its full sequence is Glycine cleavage system H protein (131 aa).

In terms of domain architecture, Lipoyl-binding spans 24-106; sequence RVTVGISDHA…YGEGWIFVVE (83 aa). Lys65 is modified (N6-lipoyllysine).

The protein belongs to the GcvH family. The glycine cleavage system is composed of four proteins: P, T, L and H. (R)-lipoate serves as cofactor.

In terms of biological role, the glycine cleavage system catalyzes the degradation of glycine. The H protein shuttles the methylamine group of glycine from the P protein to the T protein. In Xanthomonas campestris pv. campestris (strain 8004), this protein is Glycine cleavage system H protein.